A 210-amino-acid chain; its full sequence is Small ribosomal subunit protein uS3 (210 aa).

Positions 38–106 constitute a KH type-2 domain; it reads LKSFLKKRLY…EVYLNIQEVR (69 aa).

The protein belongs to the universal ribosomal protein uS3 family. As to quaternary structure, part of the 30S ribosomal subunit. Forms a tight complex with proteins S10 and S14.

Its function is as follows. Binds the lower part of the 30S subunit head. Binds mRNA in the 70S ribosome, positioning it for translation. The polypeptide is Small ribosomal subunit protein uS3 (Geotalea daltonii (strain DSM 22248 / JCM 15807 / FRC-32) (Geobacter daltonii)).